The chain runs to 492 residues: B3 domain-containing protein REM3 (492 aa).

The segment at residues 12–104 (NRPFFVRSLA…VFHVTPSGRS (93 aa)) is a DNA-binding region (TF-B3 1). Residues 105–116 (FSQIRTSSSSGD) are compositionally biased toward low complexity. Residues 105–134 (FSQIRTSSSSGDYDSDDDDDEAGDDDSDSK) are disordered. A compositionally biased stretch (acidic residues) spans 117-131 (YDSDDDDDEAGDDDS). 2 DNA-binding regions (TF-B3) span residues 154-250 (YCLL…LCFK) and 286-382 (FLTV…FCSE). Residues 385–395 (IEQEEAPEERG) show a composition bias toward basic and acidic residues. The segment at 385–427 (IEQEEAPEERGTPLPKRARVSAEVGHSRRTQAPNKSSDDPKIL) is disordered.

It is found in the nucleus. This chain is B3 domain-containing protein REM3 (REM3), found in Arabidopsis thaliana (Mouse-ear cress).